The primary structure comprises 361 residues: Caveolae-associated protein 4 (361 aa).

The tract at residues 1–21 is disordered; sequence MEHNGSASNADKIHQNRLSNV. A coiled-coil region spans residues 100–124; sequence IKDVKARVEKQQTHVKKVEAKQEEI. Phosphoserine is present on residues Ser-152, Ser-171, and Ser-172. Positions 204–248 form a coiled coil; it reads ENMQKTRQNFDKKVNRIRTRIVTPERRERLRQSGERLRQSGERLK. Residues 230-255 show a composition bias toward basic and acidic residues; it reads RERLRQSGERLRQSGERLKQSGERFK. 2 disordered regions span residues 230–283 and 310–346; these read RERL…AVAE and PEALSETDPEEASATHPPQEGGEVSTPEPLKVTFKPQ. Thr-335 is subject to Phosphothreonine. Ser-354 bears the Phosphoserine mark.

Belongs to the CAVIN family. As to quaternary structure, component of the CAVIN complex composed of CAVIN1, CAVIN2, CAVIN3 and CAVIN4. Interacts with CAVIN1, ADRA1A, ADRA1B, MAPK1 and MAPK3. Interacts with CAVIN2; this augments the transactivation of NPPA.

It is found in the cytoplasm. Its subcellular location is the myofibril. The protein localises to the sarcomere. The protein resides in the cytosol. It localises to the cell membrane. It is found in the sarcolemma. Its subcellular location is the membrane. The protein localises to the caveola. In terms of biological role, modulates the morphology of formed caveolae in cardiomyocytes, but is not required for caveolar formation. Facilitates the recruitment of MAPK1/3 to caveolae within cardiomyocytes and regulates alpha-1 adrenergic receptor-induced hypertrophic responses in cardiomyocytes through MAPK1/3 activation. Contributes to proper membrane localization and stabilization of caveolin-3 (CAV3) in cardiomyocytes. Induces RHOA activation and activates NPPA transcription and myofibrillar organization through the Rho/ROCK signaling pathway. The protein is Caveolae-associated protein 4 (CAVIN4) of Bos taurus (Bovine).